The sequence spans 272 residues: Indole-3-glycerol phosphate synthase (272 aa).

It belongs to the TrpC family.

The enzyme catalyses 1-(2-carboxyphenylamino)-1-deoxy-D-ribulose 5-phosphate + H(+) = (1S,2R)-1-C-(indol-3-yl)glycerol 3-phosphate + CO2 + H2O. Its pathway is amino-acid biosynthesis; L-tryptophan biosynthesis; L-tryptophan from chorismate: step 4/5. This is Indole-3-glycerol phosphate synthase from Mycobacteroides abscessus (strain ATCC 19977 / DSM 44196 / CCUG 20993 / CIP 104536 / JCM 13569 / NCTC 13031 / TMC 1543 / L948) (Mycobacterium abscessus).